Consider the following 221-residue polypeptide: Superoxide dismutase [Mn] 1, mitochondrial (221 aa).

Residues 1–24 (MLQNTVRCVSKLVQPITGVAAVRS) constitute a mitochondrion transit peptide. Residues H50, H98, D182, and H186 each contribute to the Mn(2+) site.

This sequence belongs to the iron/manganese superoxide dismutase family. Homotetramer. The cofactor is Mn(2+).

Its subcellular location is the mitochondrion matrix. The catalysed reaction is 2 superoxide + 2 H(+) = H2O2 + O2. In terms of biological role, destroys superoxide anion radicals which are normally produced within the cells and which are toxic to biological systems. In Caenorhabditis elegans, this protein is Superoxide dismutase [Mn] 1, mitochondrial (sod-2).